Here is a 568-residue protein sequence, read N- to C-terminus: PWWP domain-containing protein2 (568 aa).

Basic and acidic residues predominate over residues 1–19 (MTEIKDSSVKDENPGKQEE). Disordered regions lie at residues 1–126 (MTEI…YKPG), 213–340 (QSTP…DVAK), and 465–568 (IASL…TGQK). Residues 29–46 (MSTATNNSKNIETTSSNG) show a composition bias toward polar residues. 2 stretches are compositionally biased toward basic and acidic residues: residues 48-88 (EDIK…KTIE) and 100-122 (KSQKSEKSNGNARKETKQSERVN). The region spanning 125–189 (PGMRVLTKMS…SDSLTPLTSE (65 aa)) is the PWWP domain. A compositionally biased stretch (low complexity) spans 214–228 (STPDLDSLSVPSSES). The segment covering 229–249 (EVSEEESDQEMSEPSPIEEDY) has biased composition (acidic residues). Positions 255–266 (RRITRKGTKKKT) are enriched in basic residues. The span at 281-292 (LNASSNVSSNPA) shows a compositional bias: polar residues. A compositionally biased stretch (acidic residues) spans 325–336 (KEEEEGSVANEE). Basic and acidic residues-rich tracts occupy residues 489-500 (KQNEDNEDKVKA) and 514-541 (DASKDMISEEKSSKDADNSLEVAGKDFA).

This is PWWP domain-containing protein2 (pdp2) from Schizosaccharomyces pombe (strain 972 / ATCC 24843) (Fission yeast).